Reading from the N-terminus, the 431-residue chain is MNKLENPLRDDVAGPAPRHQTTQVMVGDVAVGGGAPIVVQSMTNTDTADVEGTIKQIAALARAGSEMVRITVDREEAAAAVPHIRDGIRKLGLTTPIIGDFHYIGHKLLAEYPACAEALDKYRINPGNVGFKNKRDTQFADIVEIAIKNNKAVRIGANWGSLDQELLTKLMDENAASANPRDVRAVTREAMVQSALLSAARAEEIGLPKNKMILSAKVSAVQDLIAVYQDLASRSDYAIHLGLTEAGMGSKGIVASSAALGILLQQGIGDTIRISLTPEPGGDRTREVQVGQELLQTMGFRTFVPLVAACPGCGRTTSTTFQELARSIQDFIRDEMPEWRSRYPGVENLNVAVMGCIVNGPGESKHANIGISLPGTGETPAAPVFVDGEKFRTLRGENIAADFKALVIDYIEQRYGATPKPGAAQMVPAAE.

Residues 1–12 (MNKLENPLRDDV) are compositionally biased toward basic and acidic residues. Residues 1 to 20 (MNKLENPLRDDVAGPAPRHQ) are disordered. Residues cysteine 310, cysteine 313, cysteine 356, and glutamate 363 each coordinate [4Fe-4S] cluster.

It belongs to the IspG family. [4Fe-4S] cluster serves as cofactor.

It catalyses the reaction (2E)-4-hydroxy-3-methylbut-2-enyl diphosphate + oxidized [flavodoxin] + H2O + 2 H(+) = 2-C-methyl-D-erythritol 2,4-cyclic diphosphate + reduced [flavodoxin]. Its pathway is isoprenoid biosynthesis; isopentenyl diphosphate biosynthesis via DXP pathway; isopentenyl diphosphate from 1-deoxy-D-xylulose 5-phosphate: step 5/6. Converts 2C-methyl-D-erythritol 2,4-cyclodiphosphate (ME-2,4cPP) into 1-hydroxy-2-methyl-2-(E)-butenyl 4-diphosphate. The protein is 4-hydroxy-3-methylbut-2-en-1-yl diphosphate synthase (flavodoxin) of Rhodopseudomonas palustris (strain TIE-1).